A 90-amino-acid chain; its full sequence is Co-chaperonin GroES (90 aa).

This sequence belongs to the GroES chaperonin family. As to quaternary structure, heptamer of 7 subunits arranged in a ring. Interacts with the chaperonin GroEL.

The protein localises to the cytoplasm. In terms of biological role, together with the chaperonin GroEL, plays an essential role in assisting protein folding. The GroEL-GroES system forms a nano-cage that allows encapsulation of the non-native substrate proteins and provides a physical environment optimized to promote and accelerate protein folding. GroES binds to the apical surface of the GroEL ring, thereby capping the opening of the GroEL channel. This is Co-chaperonin GroES from Phocaeicola vulgatus (strain ATCC 8482 / DSM 1447 / JCM 5826 / CCUG 4940 / NBRC 14291 / NCTC 11154) (Bacteroides vulgatus).